The sequence spans 447 residues: NADH-ubiquinone oxidoreductase chain 4 (447 aa).

The next 13 membrane-spanning stretches (helical) occupy residues 28–48 (IFLL…FNYI), 56–76 (MVSY…LMAS), 89–109 (FVFM…SMSV), 110–130 (FMFY…ILGW), 141–161 (VYLL…IFYI), 183–203 (LLYL…LVHL), 213–233 (PVSG…YGLL), 246–266 (YNYW…LVCL), 273–293 (ALIA…LLTM), 298–318 (LTGS…LFCL), 331–351 (LLIN…WFLL), 374–394 (IVSW…FSAA), and 409–431 (YSGV…LHWL).

The protein belongs to the complex I subunit 4 family.

The protein resides in the mitochondrion membrane. The catalysed reaction is a ubiquinone + NADH + 5 H(+)(in) = a ubiquinol + NAD(+) + 4 H(+)(out). Functionally, core subunit of the mitochondrial membrane respiratory chain NADH dehydrogenase (Complex I) that is believed to belong to the minimal assembly required for catalysis. Complex I functions in the transfer of electrons from NADH to the respiratory chain. The immediate electron acceptor for the enzyme is believed to be ubiquinone. The protein is NADH-ubiquinone oxidoreductase chain 4 (mt:ND4) of Anopheles gambiae (African malaria mosquito).